Reading from the N-terminus, the 437-residue chain is Enolase (437 aa).

Position 162 (Gln-162) interacts with (2R)-2-phosphoglycerate. Catalysis depends on Glu-204, which acts as the Proton donor. Asp-251, Glu-297, and Asp-324 together coordinate Mg(2+). Residues Lys-349, Arg-378, Ser-379, and Lys-400 each coordinate (2R)-2-phosphoglycerate. Lys-349 acts as the Proton acceptor in catalysis.

It belongs to the enolase family. Requires Mg(2+) as cofactor.

The protein resides in the cytoplasm. Its subcellular location is the secreted. It localises to the cell surface. The enzyme catalyses (2R)-2-phosphoglycerate = phosphoenolpyruvate + H2O. The protein operates within carbohydrate degradation; glycolysis; pyruvate from D-glyceraldehyde 3-phosphate: step 4/5. Its function is as follows. Catalyzes the reversible conversion of 2-phosphoglycerate (2-PG) into phosphoenolpyruvate (PEP). It is essential for the degradation of carbohydrates via glycolysis. The sequence is that of Enolase from Prosthecochloris aestuarii (strain DSM 271 / SK 413).